The sequence spans 149 residues: Protegrin-3 (149 aa).

The N-terminal stretch at 1–29 is a signal peptide; that stretch reads METQRASLCLGRWSLWLLLLALVVPSASA. Positions 30–130 are excised as a propeptide; that stretch reads QALSYREAVL…DITCNEVQGV (101 aa). The segment at 61-80 is disordered; the sequence is DQPPKADEDPGTPKPVSFTV. Disulfide bonds link Cys85/Cys96, Cys107/Cys124, Cys136/Cys145, and Cys138/Cys143. An Arginine amide modification is found at Arg148.

The protein belongs to the cathelicidin family.

Its subcellular location is the secreted. Its function is as follows. Microbicidal activity. Active against E.coli, Listeria monocytogenes and C.albicans, in vitro. In Sus scrofa (Pig), this protein is Protegrin-3 (NPG3).